Here is a 321-residue protein sequence, read N- to C-terminus: Putative glucan endo-1,3-beta-glucosidase GVI (321 aa).

A signal peptide spans 1 to 6; the sequence is LAGVEG. Glu100 (proton donor) is an active-site residue. Residue Glu241 is the Nucleophile of the active site.

Belongs to the glycosyl hydrolase 17 family.

It catalyses the reaction Hydrolysis of (1-&gt;3)-beta-D-glucosidic linkages in (1-&gt;3)-beta-D-glucans.. May provide a degree of protection against microbial invasion of germinated barley grain through its ability to degrade fungal cell wall polysaccharides. The sequence is that of Putative glucan endo-1,3-beta-glucosidase GVI from Hordeum vulgare (Barley).